We begin with the raw amino-acid sequence, 411 residues long: 2,3-bisphosphoglycerate-independent phosphoglycerate mutase 1 (411 aa).

The protein belongs to the BPG-independent phosphoglycerate mutase family. A-PGAM subfamily. As to quaternary structure, homotetramer. Mg(2+) serves as cofactor.

The catalysed reaction is (2R)-2-phosphoglycerate = (2R)-3-phosphoglycerate. It functions in the pathway carbohydrate degradation; glycolysis; pyruvate from D-glyceraldehyde 3-phosphate: step 3/5. Inhibited to approximately 20% by EDTA. Its function is as follows. Catalyzes the interconversion of 2-phosphoglycerate and 3-phosphoglycerate. This chain is 2,3-bisphosphoglycerate-independent phosphoglycerate mutase 1 (apgM1), found in Methanocaldococcus jannaschii (strain ATCC 43067 / DSM 2661 / JAL-1 / JCM 10045 / NBRC 100440) (Methanococcus jannaschii).